A 343-amino-acid polypeptide reads, in one-letter code: tRNA N6-adenosine threonylcarbamoyltransferase (343 aa).

Fe cation-binding residues include H120 and H124. Residues V142 to G146, D175, G188, D192, and N281 each bind substrate. D309 serves as a coordination point for Fe cation.

This sequence belongs to the KAE1 / TsaD family. Fe(2+) serves as cofactor.

It localises to the cytoplasm. The enzyme catalyses L-threonylcarbamoyladenylate + adenosine(37) in tRNA = N(6)-L-threonylcarbamoyladenosine(37) in tRNA + AMP + H(+). In terms of biological role, required for the formation of a threonylcarbamoyl group on adenosine at position 37 (t(6)A37) in tRNAs that read codons beginning with adenine. Is involved in the transfer of the threonylcarbamoyl moiety of threonylcarbamoyl-AMP (TC-AMP) to the N6 group of A37, together with TsaE and TsaB. TsaD likely plays a direct catalytic role in this reaction. The chain is tRNA N6-adenosine threonylcarbamoyltransferase from Halalkalibacterium halodurans (strain ATCC BAA-125 / DSM 18197 / FERM 7344 / JCM 9153 / C-125) (Bacillus halodurans).